A 149-amino-acid chain; its full sequence is UPF0208 membrane protein PBPRA2797 (149 aa).

The next 2 membrane-spanning stretches (helical) occupy residues 41 to 60 and 65 to 87; these read FATR…QMAF and ALPQ…LWWL.

Belongs to the UPF0208 family.

It localises to the cell inner membrane. The polypeptide is UPF0208 membrane protein PBPRA2797 (Photobacterium profundum (strain SS9)).